A 356-amino-acid polypeptide reads, in one-letter code: tRNA N6-adenosine threonylcarbamoyltransferase (356 aa).

Fe cation contacts are provided by His-111 and His-115. Residues 143-147 (LASGG), Asp-178, Gly-191, Asp-195, and Asn-286 contribute to the substrate site. Asp-314 lines the Fe cation pocket.

Belongs to the KAE1 / TsaD family. Fe(2+) serves as cofactor.

The protein localises to the cytoplasm. It catalyses the reaction L-threonylcarbamoyladenylate + adenosine(37) in tRNA = N(6)-L-threonylcarbamoyladenosine(37) in tRNA + AMP + H(+). Functionally, required for the formation of a threonylcarbamoyl group on adenosine at position 37 (t(6)A37) in tRNAs that read codons beginning with adenine. Is involved in the transfer of the threonylcarbamoyl moiety of threonylcarbamoyl-AMP (TC-AMP) to the N6 group of A37, together with TsaE and TsaB. TsaD likely plays a direct catalytic role in this reaction. The protein is tRNA N6-adenosine threonylcarbamoyltransferase of Sorangium cellulosum (strain So ce56) (Polyangium cellulosum (strain So ce56)).